The following is a 279-amino-acid chain: Tryptophan synthase alpha chain (279 aa).

Residues Glu50 and Asp61 each act as proton acceptor in the active site.

This sequence belongs to the TrpA family. As to quaternary structure, tetramer of two alpha and two beta chains.

It carries out the reaction (1S,2R)-1-C-(indol-3-yl)glycerol 3-phosphate + L-serine = D-glyceraldehyde 3-phosphate + L-tryptophan + H2O. The protein operates within amino-acid biosynthesis; L-tryptophan biosynthesis; L-tryptophan from chorismate: step 5/5. Functionally, the alpha subunit is responsible for the aldol cleavage of indoleglycerol phosphate to indole and glyceraldehyde 3-phosphate. The sequence is that of Tryptophan synthase alpha chain from Brucella abortus (strain S19).